The chain runs to 122 residues: Cytochrome b-c1 complex subunit 7-2, mitochondrial (122 aa).

This sequence belongs to the UQCRB/QCR7 family. As to quaternary structure, component of the ubiquinol-cytochrome c oxidoreductase (cytochrome b-c1 complex, complex III, CIII), a multisubunit enzyme composed of 10 subunits. The complex is composed of 3 respiratory subunits cytochrome b (MT-CYB), cytochrome c1 (CYC1-1 or CYC1-2) and Rieske protein (UCR1-1 or UCR1-2), 2 core protein subunits MPPalpha1 (or MPPalpha2) and MPPB, and 5 low-molecular weight protein subunits QCR7-1 (or QCR7-2), UCRQ-1 (or UCRQ-2), QCR9, UCRY and probably QCR6-1 (or QCR6-2). The complex exists as an obligatory dimer and forms supercomplexes (SCs) in the inner mitochondrial membrane with NADH-ubiquinone oxidoreductase (complex I, CI), resulting in different assemblies (supercomplexes SCI(1)III(2) and SCI(2)III(4)).

It localises to the mitochondrion inner membrane. Its function is as follows. Component of the ubiquinol-cytochrome c oxidoreductase, a multisubunit transmembrane complex that is part of the mitochondrial electron transport chain which drives oxidative phosphorylation. The respiratory chain contains 3 multisubunit complexes succinate dehydrogenase (complex II, CII), ubiquinol-cytochrome c oxidoreductase (cytochrome b-c1 complex, complex III, CIII) and cytochrome c oxidase (complex IV, CIV), that cooperate to transfer electrons derived from NADH and succinate to molecular oxygen, creating an electrochemical gradient over the inner membrane that drives transmembrane transport and the ATP synthase. The cytochrome b-c1 complex catalyzes electron transfer from ubiquinol to cytochrome c, linking this redox reaction to translocation of protons across the mitochondrial inner membrane, with protons being carried across the membrane as hydrogens on the quinol. In the process called Q cycle, 2 protons are consumed from the matrix, 4 protons are released into the intermembrane space and 2 electrons are passed to cytochrome c. In Arabidopsis thaliana (Mouse-ear cress), this protein is Cytochrome b-c1 complex subunit 7-2, mitochondrial (QCR7-2).